The chain runs to 463 residues: Probable ECA polymerase (463 aa).

Transmembrane regions (helical) follow at residues 6–26 (FGGLFVVYLISVIFILSLTWM), 39–59 (FSLLYLLTFYFGFPFTCVLVF), 65–85 (VVPVQYLLQAMLSATAFYAVY), 112–132 (ANLTWLLLALIAVATVGIFFL), 154–174 (GVALKRFFYFFIPAMLVVYFL), 180–200 (AWLLFLIGTVAFGMLTYVIVG), 201–221 (GTRANLIIAFALFLFIGIVRG), 222–242 (WITLWMLVAAGIFGIVGMFWL), 340–360 (LVVMGGVLFIPLGAIAVGLVI), 377–397 (YKAAILQAFCFGAVFNIIVLT), and 408–428 (VVFFCLIFGLCLLVAKLLYWL).

The protein belongs to the WzyE family. Probably part of a complex composed of WzxE, WzyE and WzzE.

The protein resides in the cell inner membrane. The protein operates within bacterial outer membrane biogenesis; enterobacterial common antigen biosynthesis. In terms of biological role, probably involved in the polymerization of enterobacterial common antigen (ECA) trisaccharide repeat units. The chain is Probable ECA polymerase from Pectobacterium atrosepticum (strain SCRI 1043 / ATCC BAA-672) (Erwinia carotovora subsp. atroseptica).